The sequence spans 267 residues: Cilia- and flagella-associated protein 300 (267 aa).

Belongs to the CFAP300 family.

Its subcellular location is the cytoplasm. The protein localises to the cytoskeleton. It is found in the cilium axoneme. Its function is as follows. Cilium- and flagellum-specific protein that plays a role in axonemal structure organization and motility. May play a role in outer and inner dynein arm assembly. This Xenopus tropicalis (Western clawed frog) protein is Cilia- and flagella-associated protein 300.